The chain runs to 620 residues: 1-deoxy-D-xylulose-5-phosphate synthase (620 aa).

Thiamine diphosphate is bound by residues His-80 and 121–123 (GHS). Asp-152 contacts Mg(2+). Residues 153-154 (GA), Asn-181, Tyr-288, and Glu-370 each bind thiamine diphosphate. Asn-181 is a binding site for Mg(2+).

The protein belongs to the transketolase family. DXPS subfamily. Homodimer. Mg(2+) serves as cofactor. Requires thiamine diphosphate as cofactor.

The enzyme catalyses D-glyceraldehyde 3-phosphate + pyruvate + H(+) = 1-deoxy-D-xylulose 5-phosphate + CO2. It participates in metabolic intermediate biosynthesis; 1-deoxy-D-xylulose 5-phosphate biosynthesis; 1-deoxy-D-xylulose 5-phosphate from D-glyceraldehyde 3-phosphate and pyruvate: step 1/1. Its function is as follows. Catalyzes the acyloin condensation reaction between C atoms 2 and 3 of pyruvate and glyceraldehyde 3-phosphate to yield 1-deoxy-D-xylulose-5-phosphate (DXP). In Escherichia coli O157:H7, this protein is 1-deoxy-D-xylulose-5-phosphate synthase.